The primary structure comprises 730 residues: Sodium-dependent neutral amino acid transporter B(0)AT2 (730 aa).

The disordered stretch occupies residues 1–24 (MPKNSKVVKRELDDDVTESVKDLL). Residues 1–70 (MPKNSKVVKR…RPAWSSKLQY (70 aa)) are Extracellular-facing. 2 positions are modified to phosphoserine: Ser-25 and Ser-55. The next 3 helical transmembrane spans lie at 71 to 91 (ILAQ…PYLC), 97 to 117 (GAYL…LFFL), and 149 to 169 (VVCY…LFYF). The Cytoplasmic portion of the chain corresponds to 170–223 (SQSFQQPLPWDQCPLVKNASHTFVEPECEQSSATTYYWYREALNISSSISESGG). The next 2 membrane-spanning stretches (helical) occupy residues 224 to 244 (LNWK…LAMI) and 253 to 273 (IIYF…IRAL). Asn-276 carries N-linked (GlcNAc...) asparagine glycosylation. 2 helical membrane-spanning segments follow: residues 302–322 (AATQ…AFSS) and 335–355 (VLVS…VFAV). Over 356 to 458 (LGFKANVINE…AMTHFPASPF (103 aa)) the chain is Cytoplasmic. The next 5 helical transmembrane spans lie at 459–479 (WSVM…FGTI), 494–514 (KEIL…IFVQ), 530–550 (TLPL…VYGI), 575–595 (YVSP…MGLS), and 619–639 (LVVC…VFIV). Over 640–730 (RRFNLIDDSS…IMPDMPESDL (91 aa)) the chain is Extracellular. Residues Ser-687, Ser-699, and Ser-701 each carry the phosphoserine modification.

This sequence belongs to the sodium:neurotransmitter symporter (SNF) (TC 2.A.22) family. SLC6A15 subfamily.

Its subcellular location is the membrane. The enzyme catalyses L-leucine(in) + Na(+)(in) = L-leucine(out) + Na(+)(out). It catalyses the reaction L-isoleucine(in) + Na(+)(in) = L-isoleucine(out) + Na(+)(out). It carries out the reaction L-methionine(in) + Na(+)(in) = L-methionine(out) + Na(+)(out). The catalysed reaction is L-proline(in) + Na(+)(in) = L-proline(out) + Na(+)(out). The enzyme catalyses L-alanine(in) + Na(+)(in) = L-alanine(out) + Na(+)(out). It catalyses the reaction L-asparagine(in) + Na(+)(in) = L-asparagine(out) + Na(+)(out). It carries out the reaction L-valine(in) + Na(+)(in) = L-valine(out) + Na(+)(out). The catalysed reaction is L-cysteine(in) + Na(+)(in) = L-cysteine(out) + Na(+)(out). The enzyme catalyses L-glutamine(in) + Na(+)(in) = L-glutamine(out) + Na(+)(out). It catalyses the reaction L-serine(in) + Na(+)(in) = L-serine(out) + Na(+)(out). It carries out the reaction L-threonine(in) + Na(+)(in) = L-threonine(out) + Na(+)(out). The catalysed reaction is L-pipecolate(in) + Na(+)(in) = L-pipecolate(out) + Na(+)(out). The enzyme catalyses L-phenylalanine(in) + Na(+)(in) = L-phenylalanine(out) + Na(+)(out). Functionally, functions as a sodium-dependent neutral amino acid transporter. Exhibits preference for the branched-chain amino acids, particularly leucine, valine and isoleucine and methionine. Can also transport low-affinity substrates such as alanine, phenylalanine, glutamine and pipecolic acid. Mediates the saturable, pH-sensitive and electrogenic cotransport of proline and sodium ions with a stoichiometry of 1:1. May have a role as transporter for neurotransmitter precursors into neurons. In contrast to other members of the neurotransmitter transporter family, does not appear to be chloride-dependent. In Pongo abelii (Sumatran orangutan), this protein is Sodium-dependent neutral amino acid transporter B(0)AT2 (SLC6A15).